Consider the following 876-residue polypeptide: Ergothioneine biosynthesis protein 1 (876 aa).

The interval 36–350 is L-histidine N(alpha)-methyltransferase; that stretch reads IIDIRRVAVE…TYGNEYGLHL (315 aa). Y88 lines the L-histidine pocket. S-adenosyl-L-methionine contacts are provided by G119, K125, and D146. L-histidine contacts are provided by residues N202, Y242, and 315–317; that span reads EQS. Residues 378-874 are hercynylcysteine S-oxide synthase; the sequence is ALWATWDVVT…YAWVGARVVR (497 aa). H413, H506, and H510 together coordinate Fe cation. Disordered regions lie at residues 631 to 650 and 732 to 761; these read GTTNSVSGHHSNRTSKQQLP and TNNGVEITPPSSPSSETPAESSSPSDSNTT. Over residues 744 to 758 the composition is skewed to low complexity; it reads PSSETPAESSSPSDS.

In the N-terminal section; belongs to the methyltransferase superfamily. EgtD family. The protein in the C-terminal section; belongs to the EgtB family. Fe(2+) is required as a cofactor.

The protein resides in the cytoplasm. It is found in the nucleus. It catalyses the reaction L-histidine + 3 S-adenosyl-L-methionine = hercynine + 3 S-adenosyl-L-homocysteine + 3 H(+). It carries out the reaction hercynine + L-cysteine + O2 = S-(hercyn-2-yl)-L-cysteine S-oxide + H2O. The protein operates within amino-acid biosynthesis; ergothioneine biosynthesis. In terms of biological role, catalyzes the SAM-dependent triple methylation of the alpha-amino group of histidine to form hercynine and subsequent conjugation with cysteine and oxygen to form hercynylcysteine sulfoxide, the first two steps in the biosynthesis pathway of ergothioneine. Ergothioneine is an unusual thio-histidine betaine amino acid that acts as an antioxidant against peroxide in conidia and contributes to conidial longevity. In Neurospora crassa (strain ATCC 24698 / 74-OR23-1A / CBS 708.71 / DSM 1257 / FGSC 987), this protein is Ergothioneine biosynthesis protein 1.